Reading from the N-terminus, the 1026-residue chain is Translation initiation factor IF-2, chloroplastic (1026 aa).

Residues 1-63 (MPSMLVLVGT…KKWLCRYSVS (63 aa)) constitute a chloroplast transit peptide. The span at 158–173 (AEKLEIPKPGNKEGGE) shows a compositional bias: basic and acidic residues. 3 disordered regions span residues 158 to 208 (AEKL…TMKS), 230 to 284 (FNRG…PPVK), and 300 to 393 (VSEE…KWSK). The segment covering 178 to 194 (SQPSANSSNSRNGSYAN) has biased composition (polar residues). Pro residues predominate over residues 254–269 (LAPPQPPFRPQPPVRP). Residues 306–317 (SSVKSKERKPIL) are compositionally biased toward basic and acidic residues. Residues 384-393 (SGRKGRKWSK) show a composition bias toward basic residues. The tr-type G domain occupies 499–672 (DRPPVITIMG…MLVAELQELK (174 aa)). The tract at residues 508-515 (GHVDHGKT) is G1. 508–515 (GHVDHGKT) provides a ligand contact to GTP. Residues 533–537 (GITQG) form a G2 region. The G3 stretch occupies residues 558-561 (DTPG). GTP is bound by residues 558–562 (DTPGH) and 612–615 (NKID). Residues 612 to 615 (NKID) are G4. Positions 648 to 650 (SAL) are G5.

It belongs to the TRAFAC class translation factor GTPase superfamily. Classic translation factor GTPase family. IF-2 subfamily.

It localises to the plastid. Its subcellular location is the chloroplast. In terms of biological role, one of the essential components for the initiation of protein synthesis. Protects formylmethionyl-tRNA from spontaneous hydrolysis and promotes its binding to the 30S ribosomal subunits. Also involved in the hydrolysis of GTP during the formation of the 70S ribosomal complex. The chain is Translation initiation factor IF-2, chloroplastic from Arabidopsis thaliana (Mouse-ear cress).